The following is a 549-amino-acid chain: DDB1- and CUL4-associated factor 11 (549 aa).

The span at 1–24 shows a compositional bias: low complexity; the sequence is MGSRNSSSAGSGSLEPSEGLSRRG. Positions 1 to 40 are disordered; the sequence is MGSRNSSSAGSGSLEPSEGLSRRGAGLRRSEEEEEEDEDV. 2 positions are modified to phosphoserine: S73 and S75. Residues 80–89 are compositionally biased toward basic and acidic residues; that stretch reads DSAWDGRLGD. Residues 80-100 are disordered; it reads DSAWDGRLGDRYNPPVDATPD. WD repeat units follow at residues 170–210, 216–258, 263–302, 305–345, 353–392, 435–480, and 481–520; these read TYSQ…HKFK, DVGW…TALD, ERRF…RTLQ, SHED…EDDP, GHQD…SREG, GVLH…KKLT, and NHKA…YFQD.

In terms of assembly, interacts with DDB1 and CUL4A.

Its pathway is protein modification; protein ubiquitination. May function as a substrate receptor for CUL4-DDB1 E3 ubiquitin-protein ligase complex. This is DDB1- and CUL4-associated factor 11 (Dcaf11) from Rattus norvegicus (Rat).